A 226-amino-acid chain; its full sequence is Orotidine 5'-phosphate decarboxylase (226 aa).

Residues Asp8, Lys30, 58–67, Thr117, Arg177, Gln186, Gly206, and Arg207 each bind substrate; that span reads DLKIHDIPNT. Lys60 (proton donor) is an active-site residue.

Belongs to the OMP decarboxylase family. Type 1 subfamily. In terms of assembly, homodimer.

It carries out the reaction orotidine 5'-phosphate + H(+) = UMP + CO2. It participates in pyrimidine metabolism; UMP biosynthesis via de novo pathway; UMP from orotate: step 2/2. In terms of biological role, catalyzes the decarboxylation of orotidine 5'-monophosphate (OMP) to uridine 5'-monophosphate (UMP). The polypeptide is Orotidine 5'-phosphate decarboxylase (Campylobacter jejuni subsp. jejuni serotype O:6 (strain 81116 / NCTC 11828)).